A 459-amino-acid polypeptide reads, in one-letter code: Putrescine aminotransferase (459 aa).

Pyridoxal 5'-phosphate is bound by residues 150–151 and Gln-274; that span reads GT. Lys-300 carries the post-translational modification N6-(pyridoxal phosphate)lysine. Residue Thr-332 participates in pyridoxal 5'-phosphate binding.

Belongs to the class-III pyridoxal-phosphate-dependent aminotransferase family. Putrescine aminotransferase subfamily. The cofactor is pyridoxal 5'-phosphate.

It catalyses the reaction an alkane-alpha,omega-diamine + 2-oxoglutarate = an omega-aminoaldehyde + L-glutamate. The catalysed reaction is putrescine + 2-oxoglutarate = 1-pyrroline + L-glutamate + H2O. The enzyme catalyses cadaverine + 2-oxoglutarate = 5-aminopentanal + L-glutamate. It participates in amine and polyamine degradation; putrescine degradation; 4-aminobutanal from putrescine (transaminase route): step 1/1. In terms of biological role, catalyzes the aminotransferase reaction from putrescine to 2-oxoglutarate, leading to glutamate and 4-aminobutanal, which spontaneously cyclizes to form 1-pyrroline. This is the first step in one of two pathways for putrescine degradation, where putrescine is converted into 4-aminobutanoate (gamma-aminobutyrate or GABA) via 4-aminobutanal. Also functions as a cadaverine transaminase in a a L-lysine degradation pathway to succinate that proceeds via cadaverine, glutarate and L-2-hydroxyglutarate. The chain is Putrescine aminotransferase from Escherichia coli (strain K12 / MC4100 / BW2952).